The primary structure comprises 95 residues: Co-chaperonin GroES (95 aa).

This sequence belongs to the GroES chaperonin family. As to quaternary structure, heptamer of 7 subunits arranged in a ring. Interacts with the chaperonin GroEL.

The protein resides in the cytoplasm. Its function is as follows. Together with the chaperonin GroEL, plays an essential role in assisting protein folding. The GroEL-GroES system forms a nano-cage that allows encapsulation of the non-native substrate proteins and provides a physical environment optimized to promote and accelerate protein folding. GroES binds to the apical surface of the GroEL ring, thereby capping the opening of the GroEL channel. The protein is Co-chaperonin GroES of Chlorobium phaeobacteroides (strain DSM 266 / SMG 266 / 2430).